We begin with the raw amino-acid sequence, 361 residues long: Glucose 1-dehydrogenase (361 aa).

Cysteine 41 provides a ligand contact to Zn(2+). Threonine 43 contributes to the substrate binding site. Histidine 68 and glutamate 69 together coordinate Zn(2+). Residues glutamate 119, glutamate 156, and asparagine 160 each contribute to the substrate site. Glutamate 156 is a binding site for Zn(2+). Residues asparagine 216–histidine 218, phenylalanine 275–threonine 277, serine 304–aspartate 306, and lysine 349 each bind NADP(+). Aspartate 306 contributes to the substrate binding site.

This sequence belongs to the zinc-containing alcohol dehydrogenase family. Glucose 1-dehydrogenase subfamily. As to quaternary structure, homotetramer. Zn(2+) serves as cofactor.

It catalyses the reaction D-glucose + NAD(+) = D-glucono-1,5-lactone + NADH + H(+). The enzyme catalyses D-glucose + NADP(+) = D-glucono-1,5-lactone + NADPH + H(+). The catalysed reaction is D-galactose + NAD(+) = D-galactono-1,4-lactone + NADH + H(+). It carries out the reaction D-galactose + NADP(+) = D-galactono-1,5-lactone + NADPH + H(+). In terms of biological role, catalyzes the NAD(P)(+)-dependent oxidation of D-glucose to D-gluconate via gluconolactone. Is also significantly active with galactose as substrate, but not with mannose or glucose 6-phosphate. Can utilize both NAD(+) and NADP(+) as electron acceptor, with a marked preference for NADP(+). Physiologically, may be involved in the degradation of both glucose and galactose through a non-phosphorylative variant of the Entner-Doudoroff pathway. This is Glucose 1-dehydrogenase from Thermoplasma acidophilum (strain ATCC 25905 / DSM 1728 / JCM 9062 / NBRC 15155 / AMRC-C165).